A 159-amino-acid polypeptide reads, in one-letter code: Phosphopantetheine adenylyltransferase (159 aa).

S9 lines the substrate pocket. ATP is bound by residues 9 to 10 (SF) and H17. K41, L73, and K87 together coordinate substrate. ATP-binding positions include 88–90 (GLR), E98, and 123–129 (YSYLSSS).

Belongs to the bacterial CoaD family. As to quaternary structure, homohexamer. The cofactor is Mg(2+).

The protein resides in the cytoplasm. It carries out the reaction (R)-4'-phosphopantetheine + ATP + H(+) = 3'-dephospho-CoA + diphosphate. The protein operates within cofactor biosynthesis; coenzyme A biosynthesis; CoA from (R)-pantothenate: step 4/5. Its function is as follows. Reversibly transfers an adenylyl group from ATP to 4'-phosphopantetheine, yielding dephospho-CoA (dPCoA) and pyrophosphate. This chain is Phosphopantetheine adenylyltransferase, found in Clostridium botulinum (strain Eklund 17B / Type B).